We begin with the raw amino-acid sequence, 793 residues long: MRIGVYICHCGLNIAGVIDVSALEAMANELEDVVLAREVQFLCSDSGQEGIIKDIKDNKLDRVVVAACSPRLHEKTFRHVMEKAGLNPYLMEMVNIREQCSWVHADDPQMATQKAFDLIRMGVAKARFLRELSATNSKASRNVLIIGGGVAGIEAALNLAEAGFPVTMVEKESTIGGKMALMNEVFPTNDCSICVLAPKMTEVQNHPNITLYTYSEVTDISGSVGKFHVRVKRKPRFVLEDKCKGCVDLCSGVCPVEIENPMNYGIGKTRAIYMPIPQSVPQVVLIDPDHCVGCGLCQLACPAEAVDYEQKPEEIEFEAGAIIVSTGYQLFDASRKKEYGFGKYPDVITNMQLERMLNSAGPTGGRVLVPSTGEPPKSVAFIQCVGSRDKTVGNEYCSRVCCMAALKNSQMVKERYPDTDVTIHYIDIRAAGEMYEEYYTRTQEMGVDFIRGKVAEVYSGEDGRPVVRFENTLESSVEEEAHDLVVLSTGYEPTKAAEGIGRMLNLARRPDRFFASAHPKMRPVDAPVSGVFLAGCASGPKEIQVSIAQGSACASKVMQLLGTGELEADPMGAHVDPDKCIGCRTCVEVCKFGKISIENKKAVVDEVSCYGCGDCSAACPVGAIQMRNFENEQILAQVREATAHKSQCPFIVAFLCNWCSYACADLTGMSRIRYPTNIRVIRTMCSARVNPEFVLEALKGGADGVLVAGCRMDECHYIHGNFDAKKRMDILKEVIKEIGLDPKRLRTLWISAAEGERFSNTINEFVKELEEIGPIGSEFKQECAVPGVEEVTQ.

Residue 147–170 (GGGVAGIEAALNLAEAGFPVTMVE) participates in FAD binding. 4Fe-4S ferredoxin-type domains follow at residues 233–264 (RKPRFVLEDKCKGCVDLCSGVCPVEIENPMNY), 282–311 (QVVLIDPDHCVGCGLCQLACPAEAVDYEQK), 571–600 (MGAHVDPDKCIGCRTCVEVCKFGKISIENK), and 601–629 (KAVVDEVSCYGCGDCSAACPVGAIQMRNF). [4Fe-4S] cluster contacts are provided by C243, C246, C250, C254, C291, C294, C297, C301, C580, C583, C586, C590, C609, C612, C615, and C619.

This sequence belongs to the HdrA family. As to quaternary structure, the ferredoxin/F(420)H(2)-dependent CoB-CoM heterodisulfide reductase is composed of three subunits; HdrA2, HdrB2 and HdrC2. [4Fe-4S] cluster is required as a cofactor. [2Fe-2S] cluster serves as cofactor. The cofactor is FAD.

It is found in the cytoplasm. The enzyme catalyses coenzyme B + coenzyme M + 2 oxidized [2Fe-2S]-[ferredoxin] = coenzyme M-coenzyme B heterodisulfide + 2 reduced [2Fe-2S]-[ferredoxin] + 2 H(+). It carries out the reaction coenzyme B + 2 oxidized coenzyme F420-(gamma-L-Glu)(n) + coenzyme M + 2 reduced [2Fe-2S]-[ferredoxin] + 4 H(+) = coenzyme M-coenzyme B heterodisulfide + 2 reduced coenzyme F420-(gamma-L-Glu)(n) + 2 oxidized [2Fe-2S]-[ferredoxin]. The protein operates within cofactor metabolism; coenzyme M-coenzyme B heterodisulfide reduction; coenzyme B and coenzyme M from coenzyme M-coenzyme B heterodisulfide: step 1/1. Functionally, part of a complex that catalyzes the reversible reduction of CoM-S-S-CoB to the thiol-coenzymes H-S-CoM (coenzyme M) and H-S-CoB (coenzyme B). Catalyzes the transfer of electrons from ferredoxin to CoM-S-S-CoB during methanogenesis from acetate. Electrons transfer from ferredoxin to CoM-S-S-CoB via HdrA2, HdrC2 and HdrB2. In addition, the complex can use electron bifurcation to direct electron pairs from reduced coenzyme F420 towards the reduction of both ferredoxin and CoB-CoM heterodisulfide. This activity may take place during Fe(III)-dependent anaerobic methane oxidation. This chain is Ferredoxin/F(420)H(2)-dependent CoB-CoM heterodisulfide reductase subunit A, found in Methanosarcina acetivorans (strain ATCC 35395 / DSM 2834 / JCM 12185 / C2A).